A 480-amino-acid polypeptide reads, in one-letter code: Probable glycosyltransferase At5g25310 (480 aa).

Residues 1 to 10 (MDKFQSKFTR) lie on the Cytoplasmic side of the membrane. The helical; Signal-anchor for type II membrane protein transmembrane segment at 11–31 (FGFISICFGSIALVLLISHCS) threads the bilayer. The Lumenal segment spans residues 32-480 (TSFFDYSFQK…WLRRLNLKLT (449 aa)). Residues N85, N120, N243, N271, and N281 are each glycosylated (N-linked (GlcNAc...) asparagine).

The protein belongs to the glycosyltransferase 47 family.

The protein resides in the golgi apparatus membrane. Its function is as follows. May be involved in cell wall biosynthesis. The polypeptide is Probable glycosyltransferase At5g25310 (Arabidopsis thaliana (Mouse-ear cress)).